The following is a 1828-amino-acid chain: MADERKDEGKAPHWTSASLTEAAAHPHSPEMKDQGGAGEGLSRNANGFPYREEEEGAFGEHRSQGTYSDTKENGINGELTSADRETAEEVSARIVQVVTAEAVAVLKGEQEKEAQHKDQPAALPLAAEETANLPPSPPPSPASEQTATVEEDLLTASKMEFPEQEKFPSSFAEPLDKGEMEFKMPSKPGEDFEHAALVPDTSKTPQDKKDLQGMEGEKLPPVPFAQTFGTNLEDRKQSTEPSIVMPSIGLSAEPPAPKEPKDWFIEMPTESKKDEWGLAAPISPGPLTPMREKDVLEDIPRWEGKQFDSPMPSPFHGGSFTLPLDTMKNERVSEGPRPFAPVFFQSDDKVSLQDPSALATSKESSKDEEPLKDKADKVADVSISEVTTLLGNVHSPVVEGYVGENISGEVKVTTDQEKKETSAPSVQEPTLTETEPQTKLDEKSTVSIEEAVAKKEESFKLRDDKTGVIQTSTEQSFSKEDQKGQEHTIDELKQDSFPISLEQAVTDAAMTSKTLGKVTSEPEAVSERREIQGLFEEKTADKNKLEGAGSATIAEVEMPFYEDKSGMSKYFETSALKEDMTRSTELGSDYYELSDSRGSAQESLDTISPKNQHDEKELQAKASQPSPPAQEAGYSTLAQSYTPDHPSELPEEPSSPQERMFTIDPKVYGEKRDLHSKNKDDLTLSRSLGLGGRSAIEQRSMSINLPMSCLDSIALGFNFGRGHDLSPLASDILTNTSGSMDEGDDYLPPTTPAVEKMPCFPIESKEEEDKAEQAKVTGGQTIQVETSSESPFPAKEYYKNGTVMAPDLPEMLDLAGTRSRLASVSADAEVARRKSVPSEAMLAESSTSLPPVADESPVTVKPDSQLEDMGYCVFNKYTVPLPSPVQDSENLSGESGSFYEGTDDKVRRDLATDLSLIEVKLAAAGRVKDEFTAEKEASPPTSADKSRLSREFDHDRKANDKLDTVLEKSEEHIDSKEHAKESEEMGGKVELFGLGITYDQASTKELITTKDTSPEKTEKGLSSVPEVAEVEPTTKADQGLDFAATKAEPSQLDIKVSDFGQMASGMNVDAGKAIELKFEVAQELTLSSEAPQEADSFMGVESGHIKEGGKVNETEVKEKVTKPDLVHQEAVDKEESYESSGEHESLTMESLKPDEGKKETSPETSLIQDEVALKLSVEIPCPPPVSEADLSTDEKGEVQMEFIQLPKEESTETPDIPAIPSDVTQPQPEAIVSEPAEVPSEEEEIEAGGEYDKLLFRSDTLQISDLLVSESREEFVETCPGELKGVVESVVTIEDDFITVVQTTTDEGESGSHSVRFAAPAQPEEERRPRPHDEELEIEMAAEAQAEPKDGSPDAPATPEKEEVAFSEYKTETYDDYKDETTIDDSIMDADSLWVDTQDDDRSILTEQLETIPKEERAEKDARRPSLEKHRKEKPFKTGRGRISTPERKVAKKEPSTVSRDEVRRKKAVYKKAELAKKSEVQAHSPSRKLILKPAIKYTRPTHLSCVKRKTTAASGDLAQAPGAFKQAKDKVTDGISKSPEKRSSLPRPSSILPPRRGVSGDREENSFSLNSSISSARRTTRSEPIRRAGKSGTSTPTTPGSTAITPGTPPSYSSRTPGTPGTPSYPRTPGTPKSGILVPSEKKVAIIRTPPKSPATPKQLRLINQPLPDLKNVKSKIGSTDNIKYQPKGGQVQIVTKKIDLSHVTSKCGSLKNIRHRPGGGRVKIESVKLDFKEKAQAKVGSLDNAHHVPGGGNVKIDSQKLNFREHAKARVDHGAEIITQSPSRSSVASPRRLSNVSSSGSINLLESPQLATLAEDVTAALAKQGL.

The segment covering 1 to 11 has biased composition (basic and acidic residues); it reads MADERKDEGKA. Disordered regions lie at residues 1 to 86, 109 to 379, and 397 to 490; these read MADE…DRET, EQEK…DKVA, and VVEG…HTID. Ser28 is modified (phosphoserine). Residues 109–119 show a composition bias toward basic and acidic residues; it reads EQEKEAQHKDQ. Residues 120-133 are compositionally biased toward low complexity; the sequence is PAALPLAAEETANL. Residues Ser136, Ser140, and Ser143 each carry the phosphoserine modification. 3 stretches are compositionally biased toward basic and acidic residues: residues 174–194, 205–218, and 256–276; these read PLDKGEMEFKMPSKPGEDFEH, PQDKKDLQGMEGEK, and APKEPKDWFIEMPTESKKDEW. Position 283 is a phosphoserine (Ser283). A compositionally biased stretch (basic and acidic residues) spans 290–306; that stretch reads MREKDVLEDIPRWEGKQ. A phosphoserine mark is found at Ser333 and Ser346. Composition is skewed to basic and acidic residues over residues 363 to 379, 412 to 421, and 451 to 466; these read ESSKDEEPLKDKADKVA, VTTDQEKKET, and AVAKKEESFKLRDDKT. Ser476 carries the phosphoserine modification. Over residues 477-490 the composition is skewed to basic and acidic residues; the sequence is FSKEDQKGQEHTID. 8 positions are modified to phosphoserine: Ser496, Ser520, Ser550, Ser596, Ser599, Ser603, Ser608, and Ser626. A disordered region spans residues 573-684; sequence TSALKEDMTR…HSKNKDDLTL (112 aa). Positions 596-610 are enriched in polar residues; that stretch reads SRGSAQESLDTISPK. Positions 667-683 are enriched in basic and acidic residues; sequence VYGEKRDLHSKNKDDLT. Positions 702–745 are interaction with KNDC1; sequence SINLPMSCLDSIALGFNFGRGHDLSPLASDILTNTSGSMDEGDD. Phosphoserine is present on residues Ser726 and Ser730. Thr734 is subject to Phosphothreonine. Phosphoserine occurs at positions 737 and 739. Tyr746 carries the phosphotyrosine modification. 2 disordered regions span residues 765–794 and 823–863; these read KEEEDKAEQAKVTGGQTIQVETSSESPFPA and SVSA…VKPD. Over residues 778–790 the composition is skewed to polar residues; that stretch reads GGQTIQVETSSES. A phosphoserine mark is found at Ser823, Ser883, Ser892, and Ser938. 2 disordered regions span residues 930–986 and 1005–1044; these read EFTA…EEMG and ELITTKDTSPEKTEKGLSSVPEVAEVEPTTKADQGLDFAA. A compositionally biased stretch (basic and acidic residues) spans 944–986; the sequence is DKSRLSREFDHDRKANDKLDTVLEKSEEHIDSKEHAKESEEMG. Phosphoserine occurs at positions 1050, 1139, 1140, and 1145. 4 disordered regions span residues 1087–1165, 1206–1228, 1304–1373, and 1405–1640; these read SSEA…PETS, PKEESTETPDIPAIPSDVTQPQP, TTDE…KTET, and LTEQ…ILVP. A compositionally biased stretch (basic and acidic residues) spans 1103–1161; sequence GHIKEGGKVNETEVKEKVTKPDLVHQEAVDKEESYESSGEHESLTMESLKPDEGKKETS. Phosphothreonine is present on Thr1160. Phosphoserine occurs at positions 1161 and 1165. A compositionally biased stretch (basic and acidic residues) spans 1324–1333; that stretch reads EEERRPRPHD. Ser1352 is subject to Phosphoserine. The residue at position 1358 (Thr1358) is a Phosphothreonine. Basic and acidic residues-rich tracts occupy residues 1359–1373 and 1412–1430; these read PEKEEVAFSEYKTET and IPKEERAEKDARRPSLEKH. Residues 1431 to 1440 are compositionally biased toward basic residues; that stretch reads RKEKPFKTGR. Composition is skewed to basic and acidic residues over residues 1445-1464, 1471-1481, and 1527-1544; these read TPERKVAKKEPSTVSRDEVR, KKAELAKKSEV, and QAKDKVTDGISKSPEKRS. Positions 1452 to 1472 are calmodulin-binding; that stretch reads KKEPSTVSRDEVRRKKAVYKK. At Ser1539 the chain carries Phosphoserine. A compositionally biased stretch (low complexity) spans 1546-1557; it reads LPRPSSILPPRR. Residue Ser1560 is modified to Phosphoserine. Low complexity-rich tracts occupy residues 1567–1578 and 1591–1607; these read SFSLNSSISSAR and KSGTSTPTTPGSTAITP. A Phosphoserine modification is found at Ser1592. Phosphothreonine occurs at positions 1606, 1609, 1620, 1623, and 1650. Over residues 1613-1623 the composition is skewed to polar residues; that stretch reads YSSRTPGTPGT. Residue Ser1654 is modified to Phosphoserine. Tau/MAP repeat units follow at residues 1662–1692, 1693–1723, and 1724–1755; these read RLINQPLPDLKNVKSKIGSTDNIKYQPKGGQ, VQIVTKKIDLSHVTSKCGSLKNIRHRPGGGR, and VKIESVKLDFKEKAQAKVGSLDNAHHVPGGGN. Residue Ser1680 is modified to Phosphoserine; by MARK1. The interval 1778–1802 is disordered; sequence EIITQSPSRSSVASPRRLSNVSSSG. A phosphoserine mark is found at Ser1783, Ser1788, Ser1791, Ser1796, and Ser1809. Residues 1783 to 1796 show a composition bias toward low complexity; sequence SPSRSSVASPRRLS.

In terms of assembly, interacts with KNDC1 (via KIND2); the interaction enhances MAP2 phosphorylation and localizes KNDC1 to dendrites. Interacts with DPYSL5. Phosphorylated at serine residues in K-X-G-S motifs by causing MAP/microtubule affinity-regulating kinase (MARK1 or MARK2), detachment from microtubules, and their disassembly. The interaction with KNDC1 enhances MAP2 threonine phosphorylation.

It is found in the cytoplasm. Its subcellular location is the cytoskeleton. The protein localises to the cell projection. It localises to the dendrite. In terms of biological role, the exact function of MAP2 is unknown but MAPs may stabilize the microtubules against depolymerization. They also seem to have a stiffening effect on microtubules. This chain is Microtubule-associated protein 2 (Map2), found in Mus musculus (Mouse).